The following is a 556-amino-acid chain: Arginine--tRNA ligase (556 aa).

Positions Ala-134–His-144 match the 'HIGH' region motif.

The protein belongs to the class-I aminoacyl-tRNA synthetase family. Monomer.

Its subcellular location is the cytoplasm. It catalyses the reaction tRNA(Arg) + L-arginine + ATP = L-arginyl-tRNA(Arg) + AMP + diphosphate. This chain is Arginine--tRNA ligase, found in Micrococcus luteus (strain ATCC 4698 / DSM 20030 / JCM 1464 / CCM 169 / CCUG 5858 / IAM 1056 / NBRC 3333 / NCIMB 9278 / NCTC 2665 / VKM Ac-2230) (Micrococcus lysodeikticus).